The following is a 230-amino-acid chain: MKIDNMTKLAKFVKRPNRFQAYIELEGEEMMVHVPNTGRCREILLPNCTVVLREENNPNRKTKYDLIGAYKGEKFINIDSQIPNKVVYEALYNKKVESLAKYNIIMKEKTFKNSRFDFRLENDEGEVYFLEVKGVTLEDKGVARFPDAPTERGAKHLKELVEAKKSGYGAGVLFLMQMDNISEFRPHDEMDKMFGEALRYAAINGVDVMAYECSVDEKSITLTKSVKIVL.

It belongs to the SfsA family.

The chain is Sugar fermentation stimulation protein homolog from Clostridium acetobutylicum (strain ATCC 824 / DSM 792 / JCM 1419 / IAM 19013 / LMG 5710 / NBRC 13948 / NRRL B-527 / VKM B-1787 / 2291 / W).